Here is a 165-residue protein sequence, read N- to C-terminus: Small ribosomal subunit protein uS5 (165 aa).

The 64-residue stretch at 10 to 73 folds into the S5 DRBM domain; sequence QIEKLISLNR…TSARKNLRFV (64 aa).

This sequence belongs to the universal ribosomal protein uS5 family. Part of the 30S ribosomal subunit. Contacts proteins S4 and S8.

Functionally, with S4 and S12 plays an important role in translational accuracy. Located at the back of the 30S subunit body where it stabilizes the conformation of the head with respect to the body. This is Small ribosomal subunit protein uS5 from Borreliella burgdorferi (strain ATCC 35210 / DSM 4680 / CIP 102532 / B31) (Borrelia burgdorferi).